The chain runs to 273 residues: Coiled-coil domain-containing protein 122 (273 aa).

Over residues 1 to 17 (MSDNKERKSQGFPKEDN) the composition is skewed to basic and acidic residues. The interval 1–39 (MSDNKERKSQGFPKEDNQDTSSLADAVEKVAKQQQSQAS) is disordered. Coiled coils occupy residues 24–116 (ADAV…TAQE) and 179–269 (NRIT…RKCI).

This chain is Coiled-coil domain-containing protein 122 (CCDC122), found in Homo sapiens (Human).